A 102-amino-acid polypeptide reads, in one-letter code: NADH-quinone oxidoreductase subunit K (102 aa).

3 helical membrane passes run 6–26, 30–50, and 65–85; these read MEHG…GLLI, LLFI…AFVV, and ILVI…LLLL.

This sequence belongs to the complex I subunit 4L family. In terms of assembly, NDH-1 is composed of 14 different subunits. Subunits NuoA, H, J, K, L, M, N constitute the membrane sector of the complex.

The protein localises to the cell inner membrane. It catalyses the reaction a quinone + NADH + 5 H(+)(in) = a quinol + NAD(+) + 4 H(+)(out). NDH-1 shuttles electrons from NADH, via FMN and iron-sulfur (Fe-S) centers, to quinones in the respiratory chain. The immediate electron acceptor for the enzyme in this species is believed to be ubiquinone. Couples the redox reaction to proton translocation (for every two electrons transferred, four hydrogen ions are translocated across the cytoplasmic membrane), and thus conserves the redox energy in a proton gradient. In Aeromonas salmonicida (strain A449), this protein is NADH-quinone oxidoreductase subunit K.